Here is a 339-residue protein sequence, read N- to C-terminus: tRNA N6-adenosine threonylcarbamoyltransferase (339 aa).

The Fe cation site is built by His-111 and His-115. Substrate is bound by residues Leu-134–Gly-138, Asp-167, Gly-180, and Asn-272. Asp-300 provides a ligand contact to Fe cation.

Belongs to the KAE1 / TsaD family. It depends on Fe(2+) as a cofactor.

Its subcellular location is the cytoplasm. It carries out the reaction L-threonylcarbamoyladenylate + adenosine(37) in tRNA = N(6)-L-threonylcarbamoyladenosine(37) in tRNA + AMP + H(+). Required for the formation of a threonylcarbamoyl group on adenosine at position 37 (t(6)A37) in tRNAs that read codons beginning with adenine. Is involved in the transfer of the threonylcarbamoyl moiety of threonylcarbamoyl-AMP (TC-AMP) to the N6 group of A37, together with TsaE and TsaB. TsaD likely plays a direct catalytic role in this reaction. This is tRNA N6-adenosine threonylcarbamoyltransferase from Vibrio vulnificus (strain YJ016).